We begin with the raw amino-acid sequence, 277 residues long: Thiazole synthase (277 aa).

Lysine 118 acts as the Schiff-base intermediate with DXP in catalysis. Residues glycine 179, 205 to 206, and 227 to 228 each bind 1-deoxy-D-xylulose 5-phosphate; these read AG and NT.

Belongs to the ThiG family. As to quaternary structure, homotetramer. Forms heterodimers with either ThiH or ThiS.

Its subcellular location is the plastid. It is found in the chloroplast. The enzyme catalyses [ThiS sulfur-carrier protein]-C-terminal-Gly-aminoethanethioate + 2-iminoacetate + 1-deoxy-D-xylulose 5-phosphate = [ThiS sulfur-carrier protein]-C-terminal Gly-Gly + 2-[(2R,5Z)-2-carboxy-4-methylthiazol-5(2H)-ylidene]ethyl phosphate + 2 H2O + H(+). Its pathway is cofactor biosynthesis; thiamine diphosphate biosynthesis. Functionally, catalyzes the rearrangement of 1-deoxy-D-xylulose 5-phosphate (DXP) to produce the thiazole phosphate moiety of thiamine. Sulfur is provided by the thiocarboxylate moiety of the carrier protein ThiS. In vitro, sulfur can be provided by H(2)S. The polypeptide is Thiazole synthase (Emiliania huxleyi (Coccolithophore)).